The following is a 535-amino-acid chain: Succinate-semialdehyde dehydrogenase, mitochondrial (535 aa).

Residues 1-47 constitute a mitochondrion transit peptide; that stretch reads MATCFWLRSCGARRLGSTFPGCRLRPRAGGLVPASGPAPGPAQLRCY. At Lys126 the chain carries N6-acetyllysine; alternate. Position 126 is an N6-succinyllysine; alternate (Lys126). An N6-succinyllysine mark is found at Lys135 and Lys184. NAD(+)-binding positions include Arg213 and 228 to 231; that span reads KPAE. A substrate-binding site is contributed by Arg213. Residue Lys265 is modified to N6-acetyllysine; alternate. Lys265 bears the N6-succinyllysine; alternate mark. 284–289 contacts NAD(+); sequence GSTTTG. Glu306 serves as the catalytic Proton acceptor. Arg334 contacts substrate. Cys340 acts as the Nucleophile in catalysis. An intrachain disulfide couples Cys340 to Cys342. Lys365 bears the N6-acetyllysine mark. Lys402 is subject to N6-succinyllysine. N6-acetyllysine is present on Lys411. Ser498 provides a ligand contact to substrate. At Ser499 the chain carries Phosphoserine.

It belongs to the aldehyde dehydrogenase family. As to quaternary structure, homotetramer.

Its subcellular location is the mitochondrion. The enzyme catalyses succinate semialdehyde + NAD(+) + H2O = succinate + NADH + 2 H(+). The protein operates within amino-acid degradation; 4-aminobutanoate degradation. Redox-regulated. Inhibited under oxydizing conditions. Catalyzes one step in the degradation of the inhibitory neurotransmitter gamma-aminobutyric acid (GABA). The sequence is that of Succinate-semialdehyde dehydrogenase, mitochondrial (ALDH5A1) from Hylobates lar (Lar gibbon).